The sequence spans 1189 residues: Origin recognition complex subunit 1 (1189 aa).

The required for peripherial nuclear localization stretch occupies residues 1–53; that stretch reads MTPKKKIFQNFQANDNEILSPTKKGIKLNVSKLNILNFENTIITKEKTNYEYK. Residue Thr-2 is modified to Phosphothreonine. At Ser-20 the chain carries Phosphoserine. 4 Leucine heptad repeat repeats span residues 137-143, 144-150, 151-157, and 158-164; these read LTNISSS and LSNSLDE. Basic residues predominate over residues 239–248; sequence KKNISKKNTH. 2 disordered regions span residues 239–421 and 679–749; these read KKNI…DHTD and DTQA…QSSL. Positions 254–279 are enriched in basic and acidic residues; sequence QNDKNKEKNKEKDKNIKKDRDKDIQT. The segment covering 304–320 has biased composition (low complexity); it reads NNDNVKNNLKNNINNNN. Over residues 321–339 the composition is skewed to polar residues; the sequence is TLKRSSQSVRIDSDLSSAH. Positions 353-381 are enriched in low complexity; it reads HRNNNNNNNNNNKTTSNNHNKNNKINNNN. Residues 385-394 show a composition bias toward basic and acidic residues; sequence NYKKQTDTKH. Residues 395–411 show a composition bias toward low complexity; it reads TNNTQNNKYNKTKTTNT. Positions 695-709 are enriched in polar residues; it reads KAQTTTNVKANTHTK. Basic and acidic residues-rich tracts occupy residues 710-724 and 733-742; these read TLNDHNKSKTTKNKE and DVKKKSDPHN. ATP is bound by residues Val-780 and 815-823; that span reads GMPGTGKTA. Residues Asp-903 and Glu-904 each coordinate Mg(2+). Residue Glu-904 coordinates ATP. Positions 913-922 match the PIP-box motif; the sequence is QKVLFTLFDW. Asn-937 and Arg-1003 together coordinate ATP.

Belongs to the ORC1 family. Component of the origin recognition complex (ORC). Interacts (via PIP-box) with PCNA1; the interaction occurs during DNA replication in trophozoites. In schizonts, may be phosphorylated by PK5; phosphorylation leads to ORC1 dissociation from the telomeres and var gene promoters, translocation to the cytoplasm, where it is degraded by the proteasome.

It is found in the nucleus. Its subcellular location is the chromosome. It localises to the telomere. The protein resides in the nucleolus. It carries out the reaction ATP + H2O = ADP + phosphate + H(+). Functionally, component of the origin recognition complex (ORC) that binds origins of replication and thus may regulate the initiation of DNA replication. DNA-binding may not be ATP-dependent. In a SIR2A/Sir2-dependent manner, binds to and silences telomers and subtelomeric repeat regions (TAREs). In a SIR2A/Sir2-dependent manner, binds to promoters of var genes localized next to TAREs resulting in their silencing. In Plasmodium falciparum (isolate 3D7), this protein is Origin recognition complex subunit 1.